The following is a 272-amino-acid chain: Probable feruloyl esterase C (272 aa).

The N-terminal stretch at 1-22 (MLPTILYSAILALSALTPSALA) is a signal peptide.

Belongs to the faeC family.

It localises to the secreted. The catalysed reaction is feruloyl-polysaccharide + H2O = ferulate + polysaccharide.. Involved in degradation of plant cell walls. Hydrolyzes the feruloyl-arabinose ester bond in arabinoxylans, and the feruloyl-galactose ester bond in pectin. Active against paranitrophenyl-acetate, methyl ferulate and wheat arabinoxylan. In Aspergillus clavatus (strain ATCC 1007 / CBS 513.65 / DSM 816 / NCTC 3887 / NRRL 1 / QM 1276 / 107), this protein is Probable feruloyl esterase C (faeC-1).